Reading from the N-terminus, the 368-residue chain is Propane 2-monooxygenase, hydroxylase component small subunit (368 aa).

It belongs to the TmoE/XamoE family. In terms of assembly, the propane 2-monooxygenase multicomponent enzyme system is composed of an electron transfer component and a monooxygenase component interacting with the effector protein MimD. The electron transfer component is composed of a reductase (MimB), and the monooxygenase component is formed by a large subunit (MimA) and a small subunit (MimC). Requires the presence of the chaperonin-like protein MimG to ensure a productive folding, resulting of a soluble MimC, which leads to the active form of MimABCD.

The enzyme catalyses propane + NADH + O2 + H(+) = propan-2-ol + NAD(+) + H2O. It carries out the reaction acetone + NADH + O2 + H(+) = hydroxyacetone + NAD(+) + H2O. It catalyses the reaction butan-2-one + NADH + O2 + H(+) = 1-hydroxy-2-butanone + NAD(+) + H2O. The catalysed reaction is phenol + NADH + O2 + H(+) = hydroquinone + NAD(+) + H2O. Component of the propane 2-monooxygenase multicomponent enzyme system which is involved in the degradation of propane via the O2-dependent hydroxylation of propane. Also involved in the degradation of acetone via the O2-dependent hydroxylation of acetone. Also able to catalyze the oxidation of phenol, methylethylketone (2-butanone), 1-propanol and 2-propanol. In Mycolicibacterium goodii (Mycobacterium goodii), this protein is Propane 2-monooxygenase, hydroxylase component small subunit.